The following is a 498-amino-acid chain: MRINPTTSDPEVSIREKKNLGRIAQIIGPVLDVAFPPGKMPNIYNALVVKGRDTLGQEINVTCEVQQLLGNNRVRAVAMSATEGLKRGMDVVDMGNPLSVPVGGATLGRIFNVLGEPVDNLGPVDTRTTSPIHKSAPAFIELDTKLSIFETGIKVVDLLAPYRRGGKIGLFGGAGVGKTVLIMELINNIAKAHGGVSVFGGVGERTREGNDLYMEMKESGVINEQNLAESKVALVYGQMNEPPGARMRVGLTALTMAEYFRDVNEQDVLLFIDNIFRFVQAGSEVSALLGRMPSAVGYQPTLSTEMGTLQERITSTKKGSITSIQAVYVPADDLTDPAPATTFAHLDATTVLSRGLAAKGIYPAVDPLDSTSTMLQPRIVGEEHYETAQQVKQTLQRYKELQDIIAILGLDELSEEDRLTVARARKIERFLSQPFFVAEVFTGSPGKYVGLAETIRGFKLILSGEFDSLPEQAFYLVGNIDEATAKATNLEMESKLKK.

Threonine 6 is subject to Phosphothreonine. A Phosphoserine modification is found at serine 13. ATP is bound at residue 172–179 (GGAGVGKT).

Belongs to the ATPase alpha/beta chains family. F-type ATPases have 2 components, CF(1) - the catalytic core - and CF(0) - the membrane proton channel. CF(1) has five subunits: alpha(3), beta(3), gamma(1), delta(1), epsilon(1). CF(0) has four main subunits: a(1), b(1), b'(1) and c(9-12).

It is found in the plastid. It localises to the chloroplast thylakoid membrane. It catalyses the reaction ATP + H2O + 4 H(+)(in) = ADP + phosphate + 5 H(+)(out). Functionally, produces ATP from ADP in the presence of a proton gradient across the membrane. The catalytic sites are hosted primarily by the beta subunits. The sequence is that of ATP synthase subunit beta, chloroplastic from Crucihimalaya wallichii (Rock-cress).